Here is a 300-residue protein sequence, read N- to C-terminus: Zinc finger CCCH-type antiviral protein 1-like (300 aa).

Residue Ala2 is modified to N-acetylalanine. Residues 252–263 (NTDNSSPSTEHS) are compositionally biased toward polar residues. The tract at residues 252–300 (NTDNSSPSTEHSQGLEKQGVHAAGAAEAGPLASVPAQSAKKPCPVSCEK) is disordered. The segment covering 271–283 (VHAAGAAEAGPLA) has biased composition (low complexity).

This chain is Zinc finger CCCH-type antiviral protein 1-like (ZC3HAV1L), found in Homo sapiens (Human).